The primary structure comprises 125 residues: Large-conductance mechanosensitive channel (125 aa).

3 helical membrane-spanning segments follow: residues 19 to 39, 42 to 62, and 67 to 87; these read VGVIIGAAFTAIVKSLVSNLI, LIGIFLGKIDLSNLVFSIGSA, and GSFLNEVINFLIIAFVVFLMV.

This sequence belongs to the MscL family. In terms of assembly, homopentamer.

The protein resides in the cell membrane. In terms of biological role, channel that opens in response to stretch forces in the membrane lipid bilayer. May participate in the regulation of osmotic pressure changes within the cell. The chain is Large-conductance mechanosensitive channel from Limosilactobacillus fermentum (strain NBRC 3956 / LMG 18251) (Lactobacillus fermentum).